A 416-amino-acid polypeptide reads, in one-letter code: Cyclic dinucleotide synthase CdnG (416 aa).

Residue S72 coordinates GTP. Catalysis depends on residues D89, D91, and D140. GTP is bound at residue D91. D91 serves as a coordination point for Mg(2+). The segment at R145–P167 is disordered. The segment covering K150–P167 has biased composition (basic and acidic residues). Residues K236, S253, E305, R306, and D309 each contribute to the GTP site.

It belongs to the CD-NTase family. G10 subfamily. Mg(2+) is required as a cofactor.

It carries out the reaction UTP + GTP = 3',3'-cGMP-UMP + 2 diphosphate. It catalyses the reaction GTP + ATP = 3',3'-cGAMP + 2 diphosphate. The catalysed reaction is 2 ATP = 3',3'-c-di-AMP + 2 diphosphate. In terms of biological role, cyclic nucleotide synthase (second messenger synthase) of a CBASS antivirus system. CBASS (cyclic oligonucleotide-based antiphage signaling system) provides immunity against bacteriophage. The CD-NTase protein synthesizes cyclic nucleotides in response to infection; these serve as specific second messenger signals. The signals activate a diverse range of effectors, leading to bacterial cell death and thus abortive phage infection. A type II-short CBASS system. Its function is as follows. Cyclic dinucleotide synthase that catalyzes the synthesis of predominantly 3'3'-cGMP-UMP, followed by 3'3'-cGAMP and c-di-AMP in a reaction mixture of ATP, CTP, GTP and UTP. The cyclic nucleotide products are second messengers that activate the CBASS Cap5 effector nuclease, leading to DNA degradation and probably cell death. Cyclic nucleotides do not activate the effector equally; reactions with ATP/GTP, ATP/UTP and ATP alone activate Cap5, whereas reaction with GTP/UTP (the major in vitro product) do not. The chain is Cyclic dinucleotide synthase CdnG from Bradyrhizobium diazoefficiens (strain JCM 10833 / BCRC 13528 / IAM 13628 / NBRC 14792 / USDA 110).